The chain runs to 307 residues: Ribosomal RNA small subunit methyltransferase H (307 aa).

S-adenosyl-L-methionine is bound by residues 32–34, aspartate 52, phenylalanine 78, aspartate 100, and glutamine 107; that span reads GGH.

Belongs to the methyltransferase superfamily. RsmH family.

The protein localises to the cytoplasm. It catalyses the reaction cytidine(1402) in 16S rRNA + S-adenosyl-L-methionine = N(4)-methylcytidine(1402) in 16S rRNA + S-adenosyl-L-homocysteine + H(+). Functionally, specifically methylates the N4 position of cytidine in position 1402 (C1402) of 16S rRNA. In Coxiella burnetii (strain CbuG_Q212) (Coxiella burnetii (strain Q212)), this protein is Ribosomal RNA small subunit methyltransferase H.